Here is a 65-residue protein sequence, read N- to C-terminus: Potassium channel toxin alpha-KTx 12.6 (65 aa).

A signal peptide spans 1–22 (MKMKIFIITIVIALFITSIVEA). 3 cysteine pairs are disulfide-bonded: Cys-30/Cys-51, Cys-36/Cys-56, and Cys-40/Cys-58.

Belongs to the short scorpion toxin superfamily. Potassium channel inhibitor family. Alpha-KTx 12 subfamily. Expressed by the venom gland.

It localises to the secreted. Its function is as follows. Inhibits voltage-gated potassium channels. In Lychas mucronatus (Chinese swimming scorpion), this protein is Potassium channel toxin alpha-KTx 12.6.